A 353-amino-acid polypeptide reads, in one-letter code: MTSSTLSQPIKQRGWFDVLDDWIKRDRFVFVGWSGLLLFPTAYLALGGWLTGTTFVTSWYTHGLASSYLEGANFLTAAVSTPADAMGHSLLLLWGPESQGDIVRWFQLGGLWTFVALHGAFSLIGFMLRQFEISRLVGIRPYNAIAFSGPIAVFVSVFLMYPLGQSSWFFAPSFGVAAIFRFLLFLQGFHNWTLNPFHMMGVAGILGGALLCAIHGATVENTLYEDGEQSNTFKAFEPTQEEETYSMVTANRYWSQIFGIAFSNKRWLHFFMLFVPVMGLWTSSIGIIGLALNLRAYDFVSQEIRAAEDPEFETFYTKNILLNEGLRAWMAPVDQPHENFVFPEEVLPRGNAL.

A helical transmembrane segment spans residues 41–61 (TAYLALGGWLTGTTFVTSWYT). His-118 lines the chlorophyll a pocket. The chain crosses the membrane as a helical span at residues 125-141 (GFMLRQFEISRLVGIRP). Pheophytin a contacts are provided by Gln-130 and Asn-143. Residues 153–166 (VFVSVFLMYPLGQS) form a helical membrane-spanning segment. A chlorophyll a-binding site is contributed by His-198. Residues 208 to 228 (GALLCAIHGATVENTLYEDGE) form a helical membrane-spanning segment. A plastoquinone contacts are provided by His-215 and Phe-262. Fe cation is bound at residue His-215. His-269 serves as a coordination point for Fe cation. The chain crosses the membrane as a helical span at residues 279–295 (GLWTSSIGIIGLALNLR).

Belongs to the reaction center PufL/M/PsbA/D family. PSII is composed of 1 copy each of membrane proteins PsbA, PsbB, PsbC, PsbD, PsbE, PsbF, PsbH, PsbI, PsbJ, PsbK, PsbL, PsbM, PsbT, PsbX, PsbY, PsbZ, Psb30/Ycf12, peripheral proteins PsbO, CyanoQ (PsbQ), PsbU, PsbV and a large number of cofactors. It forms dimeric complexes. It depends on The D1/D2 heterodimer binds P680, chlorophylls that are the primary electron donor of PSII, and subsequent electron acceptors. It shares a non-heme iron and each subunit binds pheophytin, quinone, additional chlorophylls, carotenoids and lipids. There is also a Cl(-1) ion associated with D1 and D2, which is required for oxygen evolution. The PSII complex binds additional chlorophylls, carotenoids and specific lipids. as a cofactor.

It is found in the host cellular thylakoid membrane. It catalyses the reaction 2 a plastoquinone + 4 hnu + 2 H2O = 2 a plastoquinol + O2. In terms of biological role, photosystem II (PSII) is a light-driven water:plastoquinone oxidoreductase that uses light energy to abstract electrons from H(2)O, generating O(2) and a proton gradient subsequently used for ATP formation. It consists of a core antenna complex that captures photons, and an electron transfer chain that converts photonic excitation into a charge separation. The D1/D2 (PsbA/PsbD) reaction center heterodimer binds P680, the primary electron donor of PSII as well as several subsequent electron acceptors. D2 is needed for assembly of a stable PSII complex. The chain is Photosystem II D2 protein (psbD) from Synechococcus phage S-PM2.